The chain runs to 93 residues: UPF0358 protein lin1058 (93 aa).

Belongs to the UPF0358 family.

The polypeptide is UPF0358 protein lin1058 (Listeria innocua serovar 6a (strain ATCC BAA-680 / CLIP 11262)).